The following is a 141-amino-acid chain: MAIERTLSIIKPDAVAKNVIGQIYSRFEGAGLKIIAARMAQLSRAEAEGFYAVHSARPFFKDLVDFMISGPVMIQVLEGENAIAKHRDLMGATDPKKAEKGTIRADFADSIDANAVHGSDAEETAKVEIAYYFPALNVYSR.

6 residues coordinate ATP: Lys11, Phe59, Arg87, Thr93, Arg104, and Asn114. Residue His117 is the Pros-phosphohistidine intermediate of the active site.

The protein belongs to the NDK family. As to quaternary structure, homotetramer. Mg(2+) is required as a cofactor.

The protein resides in the cytoplasm. The enzyme catalyses a 2'-deoxyribonucleoside 5'-diphosphate + ATP = a 2'-deoxyribonucleoside 5'-triphosphate + ADP. It carries out the reaction a ribonucleoside 5'-diphosphate + ATP = a ribonucleoside 5'-triphosphate + ADP. In terms of biological role, major role in the synthesis of nucleoside triphosphates other than ATP. The ATP gamma phosphate is transferred to the NDP beta phosphate via a ping-pong mechanism, using a phosphorylated active-site intermediate. This Herminiimonas arsenicoxydans protein is Nucleoside diphosphate kinase.